The following is a 257-amino-acid chain: MDSKLIFFDIDGTIYDHDKNIPESTRKTVAELQRQGHHVFIASGRSPFLVKPILEELGIHSFISYNGQFVVFENQVIYKNPLPENAIRRLLKQADEGKHPVVFMAEDTMKATVADHPHVLEGIGSLKTDYPETDDLFYEGKEIFQLLLFCQDEEEKAYAAFPEFDLVRWHELSTDVLPHGGSKAEGIKKVIERLPFDIGDTYAFGDGLNDLQMIEYVGTGVAMGNAVPELKEIADFVTKPVDEDGIAYAVKELGLLK.

Catalysis depends on D9, which acts as the Nucleophile. D9 provides a ligand contact to Mg(2+). I10 contacts phosphate. Residue D11 coordinates Mg(2+). Phosphate-binding positions include 43–44 (SG) and K183. D206 serves as a coordination point for Mg(2+). N209 lines the phosphate pocket.

The protein belongs to the HAD-like hydrolase superfamily. Cof family. Mg(2+) serves as cofactor.

The chain is Putative phosphatase YkrA (ykrA) from Bacillus subtilis (strain 168).